A 68-amino-acid polypeptide reads, in one-letter code: Metallothionein-3 (68 aa).

Met-1 carries the post-translational modification N-acetylmethionine. The tract at residues 1-30 (MDPETCPCPTGGSCTCSDPCKCEGCTCASS) is beta. A divalent metal cation-binding residues include Cys-6, Cys-8, Cys-14, Cys-16, Cys-20, Cys-22, Cys-25, and Cys-27. The alpha stretch occupies residues 31–68 (KKSCCSCCPAECEKCAKDCVCKGGEGAEAEEKKCSCCQ). At Ser-33 the chain carries Phosphoserine. 11 residues coordinate a divalent metal cation: Cys-34, Cys-35, Cys-37, Cys-38, Cys-42, Cys-45, Cys-49, Cys-51, Cys-64, Cys-66, and Cys-67.

It belongs to the metallothionein superfamily. Type 1 family.

Functionally, binds heavy metals. Contains five zinc and one copper atoms per polypeptide chain and only a negligible amount of cadmium. This chain is Metallothionein-3 (MT3), found in Bos mutus grunniens (Wild yak).